Here is a 197-residue protein sequence, read N- to C-terminus: MMITPTGDGPWLVAGLGNPGPTYAGNRHNAGFMVVDLLAERTGSRLKSHRSRADVAETRLAGARAVLARPLSFMNLSGGPVAAARSFYKVEVSRLIVVHDELDIPFGAVRLKRGGGDNGHNGLRSISSALGTRDYLRVRVGIGRPPGRMDPADFVLRDFTSTERRELPLLLEHAADSVEMLIADGLEPAQNRYHALL.

Tyr-23 provides a ligand contact to tRNA. Catalysis depends on His-28, which acts as the Proton acceptor. Positions 73, 75, and 121 each coordinate tRNA.

This sequence belongs to the PTH family. In terms of assembly, monomer.

Its subcellular location is the cytoplasm. It catalyses the reaction an N-acyl-L-alpha-aminoacyl-tRNA + H2O = an N-acyl-L-amino acid + a tRNA + H(+). Hydrolyzes ribosome-free peptidyl-tRNAs (with 1 or more amino acids incorporated), which drop off the ribosome during protein synthesis, or as a result of ribosome stalling. Its function is as follows. Catalyzes the release of premature peptidyl moieties from peptidyl-tRNA molecules trapped in stalled 50S ribosomal subunits, and thus maintains levels of free tRNAs and 50S ribosomes. The chain is Peptidyl-tRNA hydrolase from Frankia casuarinae (strain DSM 45818 / CECT 9043 / HFP020203 / CcI3).